A 1080-amino-acid polypeptide reads, in one-letter code: Protein transport protein SEC24 C (1080 aa).

Positions M1–P10 are enriched in pro residues. Disordered regions lie at residues M1–I189, G201–Q220, and T316–V367. The span at P12 to L43 shows a compositional bias: polar residues. Over residues R45–Q70 the composition is skewed to pro residues. Low complexity-rich tracts occupy residues Q71–P84, P142–A160, and G178–I189. Residues G340–A356 are compositionally biased toward polar residues. Zn(2+) is bound by residues C430, C433, C452, and C455. The interval C430 to C455 is zinc finger-like.

Belongs to the SEC23/SEC24 family. SEC24 subfamily. As to quaternary structure, component of the coat protein complex II (COPII), composed of at least five proteins: the Sec23/24 complex, the Sec13/31 complex and Sar1. In terms of tissue distribution, mainly expressed at low levels in pollen, leaves, roots and stems.

It localises to the cytoplasmic vesicle. The protein resides in the COPII-coated vesicle membrane. It is found in the endoplasmic reticulum membrane. The protein localises to the golgi apparatus membrane. In terms of biological role, component of the coat protein complex II (COPII), that covers ER-derived vesicles involved in transport from the endoplasmic reticulum to the Golgi apparatus. COPII is composed of at least five proteins: the SEC23/24 complex, the SEC13/31 complex, and the protein SAR1. Acts in the cytoplasm to promote the transport of secretory, plasma membrane, and vacuolar proteins from the endoplasmic reticulum to the Golgi complex. The chain is Protein transport protein SEC24 C from Arabidopsis thaliana (Mouse-ear cress).